Consider the following 209-residue polypeptide: MGKLEVIAHPLIQHKLSILRRTDTSTKAFRELVDEIAMLMGYEVLRDLPLEDVEIETPITKTVQKQIAGKKLAIVPILRAGIGMVDGLLSLVPAAKVGHIGMYRDEETLKPVEYLVKLPEDIDQRQIFVVDPMLATGGSAILAVDSLKKRGASHITFVCLVSAPEGVKALQEAHPDVDIFTAALDDHLNDHGYIVPGLGDAGDRLFGTK.

Residues R79, R104, and 131-139 each bind 5-phospho-alpha-D-ribose 1-diphosphate; that span reads DPMLATGGS. Uracil is bound by residues I194 and 199 to 201; that span reads GDA. D200 contacts 5-phospho-alpha-D-ribose 1-diphosphate.

Belongs to the UPRTase family. The cofactor is Mg(2+).

The enzyme catalyses UMP + diphosphate = 5-phospho-alpha-D-ribose 1-diphosphate + uracil. It participates in pyrimidine metabolism; UMP biosynthesis via salvage pathway; UMP from uracil: step 1/1. Allosterically activated by GTP. In terms of biological role, catalyzes the conversion of uracil and 5-phospho-alpha-D-ribose 1-diphosphate (PRPP) to UMP and diphosphate. In Streptococcus sanguinis (strain SK36), this protein is Uracil phosphoribosyltransferase.